The primary structure comprises 193 residues: dCTP deaminase (193 aa).

Residues 110–115 (RSSLAR), Asp-128, 136–138 (VLE), Tyr-171, Lys-178, and Gln-182 contribute to the dCTP site. Catalysis depends on Glu-138, which acts as the Proton donor/acceptor. The tract at residues 169–193 (RPYNRRQDAKYRDQQGAVASRIDKD) is disordered.

The protein belongs to the dCTP deaminase family. As to quaternary structure, homotrimer.

The enzyme catalyses dCTP + H2O + H(+) = dUTP + NH4(+). It functions in the pathway pyrimidine metabolism; dUMP biosynthesis; dUMP from dCTP (dUTP route): step 1/2. In terms of biological role, catalyzes the deamination of dCTP to dUTP. This Salmonella paratyphi B (strain ATCC BAA-1250 / SPB7) protein is dCTP deaminase.